Consider the following 322-residue polypeptide: tRNA uridine(34) hydroxylase (322 aa).

One can recognise a Rhodanese domain in the interval 125–219; the sequence is QDPNTIVIDA…YGKDPEVQGK (95 aa). The active-site Cysteine persulfide intermediate is the cysteine 179.

It belongs to the TrhO family.

The enzyme catalyses uridine(34) in tRNA + AH2 + O2 = 5-hydroxyuridine(34) in tRNA + A + H2O. Its function is as follows. Catalyzes oxygen-dependent 5-hydroxyuridine (ho5U) modification at position 34 in tRNAs. In Bacillus subtilis (strain 168), this protein is tRNA uridine(34) hydroxylase.